The chain runs to 100 residues: Nucleoid-associated protein jhp_0031 (100 aa).

It belongs to the YbaB/EbfC family. As to quaternary structure, homodimer.

The protein localises to the cytoplasm. Its subcellular location is the nucleoid. Functionally, binds to DNA and alters its conformation. May be involved in regulation of gene expression, nucleoid organization and DNA protection. The sequence is that of Nucleoid-associated protein jhp_0031 from Helicobacter pylori (strain J99 / ATCC 700824) (Campylobacter pylori J99).